Reading from the N-terminus, the 486-residue chain is Cardiolipin synthase A (486 aa).

Transmembrane regions (helical) follow at residues 3–23 (TFYTVVNWLVILGYWLLIAGV) and 38–58 (MAWLLIIYILPLVGIIAYLSF). PLD phosphodiesterase domains lie at 219–246 (MDLRQHRKMVMIDNYIAYTGSMNMVDPR) and 399–426 (EGGLLHTKSVLVDGELSLVGTVNLDMRS). Catalysis depends on residues His-224, Lys-226, Asp-231, His-404, Lys-406, and Asp-411.

It belongs to the phospholipase D family. Cardiolipin synthase subfamily. ClsA sub-subfamily.

The protein localises to the cell inner membrane. It carries out the reaction 2 a 1,2-diacyl-sn-glycero-3-phospho-(1'-sn-glycerol) = a cardiolipin + glycerol. Its function is as follows. Catalyzes the reversible phosphatidyl group transfer from one phosphatidylglycerol molecule to another to form cardiolipin (CL) (diphosphatidylglycerol) and glycerol. This Klebsiella pneumoniae (strain 342) protein is Cardiolipin synthase A.